The chain runs to 86 residues: Large ribosomal subunit protein bL31B (86 aa).

It belongs to the bacterial ribosomal protein bL31 family. Type B subfamily. As to quaternary structure, part of the 50S ribosomal subunit.

The protein is Large ribosomal subunit protein bL31B of Burkholderia lata (strain ATCC 17760 / DSM 23089 / LMG 22485 / NCIMB 9086 / R18194 / 383).